We begin with the raw amino-acid sequence, 463 residues long: Chromosomal replication initiator protein DnaA (463 aa).

Positions 1 to 83 (MSTNQIILTD…LQLFQHYNNT (83 aa)) are domain I, interacts with DnaA modulators. The segment at 83–124 (TIKSIEIITKELPGTTQTVIELPTKTFADIGSSELNSENIFS) is domain II. The interval 125-343 (TLDVRFTFDN…GALNKVIAHS (219 aa)) is domain III, AAA+ region. Gly171, Gly173, Lys174, and Thr175 together coordinate ATP. Residues 344-463 (NFTLKEITLE…INLLMKILQN (120 aa)) are domain IV, binds dsDNA.

Belongs to the DnaA family. In terms of assembly, oligomerizes as a right-handed, spiral filament on DNA at oriC.

The protein resides in the cytoplasm. Functionally, plays an essential role in the initiation and regulation of chromosomal replication. ATP-DnaA binds to the origin of replication (oriC) to initiate formation of the DNA replication initiation complex once per cell cycle. Binds the DnaA box (a 9 base pair repeat at the origin) and separates the double-stranded (ds)DNA. Forms a right-handed helical filament on oriC DNA; dsDNA binds to the exterior of the filament while single-stranded (ss)DNA is stabiized in the filament's interior. The ATP-DnaA-oriC complex binds and stabilizes one strand of the AT-rich DNA unwinding element (DUE), permitting loading of DNA polymerase. After initiation quickly degrades to an ADP-DnaA complex that is not apt for DNA replication. Binds acidic phospholipids. The sequence is that of Chromosomal replication initiator protein DnaA from Rickettsia felis (strain ATCC VR-1525 / URRWXCal2) (Rickettsia azadi).